Here is a 404-residue protein sequence, read N- to C-terminus: Glycosylated lysosomal membrane protein (404 aa).

A signal peptide spans 1 to 35 (MRGSVERGWGWGHCASSPLLLWTLLLFAAPFGLLG). Residues 36 to 371 (EKTRQLSLEV…GRLVPTSPGH (336 aa)) lie on the Lumenal side of the membrane. N-linked (GlcNAc...) asparagine glycosylation is found at asparagine 65, asparagine 134, asparagine 159, asparagine 186, and asparagine 229. Residues 372-392 (HGSALGAPGLMLLGGGLVLLL) form a helical membrane-spanning segment. Topologically, residues 393 to 404 (HHRKYSEYQSIN) are cytoplasmic. A Lysosomal targeting motif motif is present at residues 400 to 404 (YQSIN).

This sequence belongs to the GLMP family. As to quaternary structure, interacts (via lumenal domain) with lysosomal protein MFSD1; the interaction starts while both proteins are still in the endoplasmic reticulum and is required for stabilization of MFSD1 in lysosomes but has no direct effect on its targeting to lysosomes or transporter activity. Post-translationally, highly N-glycosylated. N-glycosylation is essential for GLMP stability and for MFSD1 lysosomal localization.

The protein localises to the lysosome membrane. In terms of biological role, required to protect lysosomal transporter MFSD1 from lysosomal proteolysis and for MFSD1 lysosomal localization. The protein is Glycosylated lysosomal membrane protein of Pongo abelii (Sumatran orangutan).